The following is a 154-amino-acid chain: Endoribonuclease YbeY (154 aa).

3 residues coordinate Zn(2+): His114, His118, and His124.

This sequence belongs to the endoribonuclease YbeY family. Zn(2+) serves as cofactor.

Its subcellular location is the cytoplasm. In terms of biological role, single strand-specific metallo-endoribonuclease involved in late-stage 70S ribosome quality control and in maturation of the 3' terminus of the 16S rRNA. The chain is Endoribonuclease YbeY from Haemophilus influenzae (strain ATCC 51907 / DSM 11121 / KW20 / Rd).